The chain runs to 364 residues: UDP-3-O-acylglucosamine N-acyltransferase (364 aa).

Catalysis depends on histidine 258, which acts as the Proton acceptor.

This sequence belongs to the transferase hexapeptide repeat family. LpxD subfamily. As to quaternary structure, homotrimer.

The enzyme catalyses a UDP-3-O-[(3R)-3-hydroxyacyl]-alpha-D-glucosamine + a (3R)-hydroxyacyl-[ACP] = a UDP-2-N,3-O-bis[(3R)-3-hydroxyacyl]-alpha-D-glucosamine + holo-[ACP] + H(+). It functions in the pathway bacterial outer membrane biogenesis; LPS lipid A biosynthesis. In terms of biological role, catalyzes the N-acylation of UDP-3-O-acylglucosamine using 3-hydroxyacyl-ACP as the acyl donor. Is involved in the biosynthesis of lipid A, a phosphorylated glycolipid that anchors the lipopolysaccharide to the outer membrane of the cell. In Burkholderia orbicola (strain MC0-3), this protein is UDP-3-O-acylglucosamine N-acyltransferase.